The following is a 1033-amino-acid chain: SIT4-associating protein SAP190 (1033 aa).

4 disordered regions span residues 32–82 (DQDD…TTES), 147–213 (PEII…QVET), 768–813 (FGND…HDSG), and 828–1033 (ENEE…KEAF). Positions 158–170 (ILIERDRKDKKED) are enriched in basic and acidic residues. Residues 171–182 (AEEGGDSEETTN) show a composition bias toward acidic residues. The segment covering 183–195 (DSDHDSGDERSVD) has biased composition (basic and acidic residues). A Phosphoserine modification is found at Ser-774. Acidic residues-rich tracts occupy residues 784–793 (SEDIIGDTEG) and 828–838 (ENEEDYAEYSD). A phosphoserine mark is found at Ser-857, Ser-862, and Ser-892. Over residues 858-879 (DDGKSKSAESEFTDKISEHRDG) the composition is skewed to basic and acidic residues. Over residues 909-924 (SRSQPSDPKLQDQNIF) the composition is skewed to polar residues. Residues 932–944 (GVGDDDDYMDPND) are compositionally biased toward acidic residues. At Thr-990 the chain carries Phosphothreonine. A Phosphoserine modification is found at Ser-991. Residues 1000–1018 (ISSDEEDSEDEDEENDMGN) show a composition bias toward acidic residues.

It belongs to the SAPS family. Associates with the SIT4 protein phosphatase catalytic subunit in a cell-cycle-dependent manner. In terms of processing, hyperphosphorylated in the absence of SIT4.

The protein localises to the cytoplasm. Its function is as follows. Positive regulator of protein phosphatase SIT4. Involved in the general amino acid control (GAAC) response regulated by TOR. Involved in the dephosphorylation of the elongator complex subunit IKI3. This is SIT4-associating protein SAP190 (SAP190) from Saccharomyces cerevisiae (strain AWRI1631) (Baker's yeast).